Consider the following 329-residue polypeptide: NADH-quinone oxidoreductase subunit H 1 (329 aa).

Transmembrane regions (helical) follow at residues leucine 12–alanine 32, tryptophan 78–isoleucine 98, valine 120–glycine 140, leucine 159–serine 179, glycine 191–alanine 211, leucine 242–phenylalanine 262, tryptophan 270–tryptophan 290, and tryptophan 308–leucine 328.

The protein belongs to the complex I subunit 1 family. In terms of assembly, NDH-1 is composed of 14 different subunits. Subunits NuoA, H, J, K, L, M, N constitute the membrane sector of the complex.

The protein resides in the cell inner membrane. It catalyses the reaction a quinone + NADH + 5 H(+)(in) = a quinol + NAD(+) + 4 H(+)(out). In terms of biological role, NDH-1 shuttles electrons from NADH, via FMN and iron-sulfur (Fe-S) centers, to quinones in the respiratory chain. The immediate electron acceptor for the enzyme in this species is believed to be ubiquinone. Couples the redox reaction to proton translocation (for every two electrons transferred, four hydrogen ions are translocated across the cytoplasmic membrane), and thus conserves the redox energy in a proton gradient. This subunit may bind ubiquinone. In Geobacter metallireducens (strain ATCC 53774 / DSM 7210 / GS-15), this protein is NADH-quinone oxidoreductase subunit H 1.